Reading from the N-terminus, the 323-residue chain is Beta-ketoacyl-[acyl-carrier-protein] synthase III (323 aa).

Active-site residues include Cys-113 and His-250. The ACP-binding stretch occupies residues 251-255; the sequence is QANRR. Asn-280 is a catalytic residue.

It belongs to the thiolase-like superfamily. FabH family. As to quaternary structure, homodimer.

Its subcellular location is the cytoplasm. The enzyme catalyses malonyl-[ACP] + acetyl-CoA + H(+) = 3-oxobutanoyl-[ACP] + CO2 + CoA. The protein operates within lipid metabolism; fatty acid biosynthesis. Its function is as follows. Catalyzes the condensation reaction of fatty acid synthesis by the addition to an acyl acceptor of two carbons from malonyl-ACP. Catalyzes the first condensation reaction which initiates fatty acid synthesis and may therefore play a role in governing the total rate of fatty acid production. Possesses both acetoacetyl-ACP synthase and acetyl transacylase activities. Its substrate specificity determines the biosynthesis of branched-chain and/or straight-chain of fatty acids. This is Beta-ketoacyl-[acyl-carrier-protein] synthase III from Rhizobium rhizogenes (strain K84 / ATCC BAA-868) (Agrobacterium radiobacter).